The following is a 394-amino-acid chain: Hemagglutinin-esterase (394 aa).

An N-terminal signal peptide occupies residues 1-16; it reads MARFIILFLLLAPVYS. The Extracellular portion of the chain corresponds to 17–347; it reads RLCLRNHPDT…NNRVDAIPPQ (331 aa). Residue Ser32 is part of the active site. The Cell attachment site signature appears at 119–121; that stretch reads RGD. Active-site residues include Asp261 and His264. An N-linked (GlcNAc...) asparagine; by host glycan is attached at Asn333. The interval 335-358 is highly polymorphic region; that stretch reads TDVNNRVDAIPPQLSNIFISMGVA. A helical transmembrane segment spans residues 348 to 368; that stretch reads LSNIFISMGVAGFGIALFLAG. Residues 369-394 are Cytoplasmic-facing; the sequence is WKACVWIAAFMYKSRGRNPPANLSVA.

The protein localises to the host membrane. The protein resides in the virion membrane. It catalyses the reaction N-acetyl-9-O-acetylneuraminate + H2O = N-acetylneuraminate + acetate + H(+). The catalysed reaction is N-acetyl-4-O-acetylneuraminate + H2O = N-acetylneuraminate + acetate + H(+). In terms of biological role, performs attachment to host receptor thereby inducing virus particle entry into target cell. Binds specifically to 5-N-acetyl-4-O-acetyl neuraminic acid on host cells, which plays a major role in cell tropism of the virus. ALso mediates de-O-acetylation of N-acetyl-4-O-acetylneuraminic acid. This receptor-destroying activity is important for virus release as it probably helps preventing self-aggregation and ensures the efficient spread of the progeny virus from cell to cell. The highly polymorphic region (HPR) modulates the virulence in host. Catalyzes the removal of terminal sialic acid residues from viral and cellular glycoconjugates. In Gadus morhua (Atlantic cod), this protein is Hemagglutinin-esterase.